The following is a 253-amino-acid chain: MPVLAGINSKVLKNGDSEPSPPPAGIYRIYNMRFCPWAQRALIYASVKNVPSEVINIHLKEKPDWYFSKHYKGQVPALELDEGKKHVIESAHIPEYLDDLFPESRILPSDPYEKVQQKLLLERLAAVAPAFYAAAQAANNPEGRDEKYAALVKAFEDAEKLLTGDFFSGKAKPGFADYLIFPNYQRVFWLSHILPNSPFSSESFPGPNFPKLAKWYRTLDSIPEVAAASQPTEMGVGFFNDYLKGTPNYDYGL.

Positions 25-105 (GIYRIYNMRF…YLDDLFPESR (81 aa)) constitute a GST N-terminal domain. Catalysis depends on Cys35, which acts as the Nucleophile. Glutathione contacts are provided by residues Lys62, Val75, and 89-90 (ES). Residues 110-238 (DPYEKVQQKL…SQPTEMGVGF (129 aa)) form the GST C-terminal domain.

The protein belongs to the GST superfamily. Omega family.

It carries out the reaction RX + glutathione = an S-substituted glutathione + a halide anion + H(+). The enzyme catalyses L-dehydroascorbate + 2 glutathione = glutathione disulfide + L-ascorbate. It catalyses the reaction methylarsonate + 2 glutathione + H(+) = methylarsonous acid + glutathione disulfide + H2O. Functionally, exhibits glutathione-dependent thiol transferase activity. Has dehydroascorbate reductase activity and may contribute to the recycling of ascorbic acid. Participates in the biotransformation of inorganic arsenic and reduces monomethylarsonic acid (MMA). This is Probable glutathione transferase omega-2 from Caenorhabditis briggsae.